Consider the following 274-residue polypeptide: tRNA pseudouridine synthase A (274 aa).

Aspartate 56 functions as the Nucleophile in the catalytic mechanism. Tyrosine 109 contributes to the substrate binding site.

Belongs to the tRNA pseudouridine synthase TruA family.

It carries out the reaction uridine(38/39/40) in tRNA = pseudouridine(38/39/40) in tRNA. In terms of biological role, formation of pseudouridine at positions 38, 39 and 40 in the anticodon stem and loop of transfer RNAs. This is tRNA pseudouridine synthase A from Methanosphaera stadtmanae (strain ATCC 43021 / DSM 3091 / JCM 11832 / MCB-3).